The chain runs to 235 residues: Uridylate kinase (235 aa).

9–12 contributes to the ATP binding site; the sequence is KLSG. Gly-51 serves as a coordination point for UMP. Gly-52 and Arg-56 together coordinate ATP. Residues Asp-71 and 132–139 contribute to the UMP site; that span reads TGNPYFTT. ATP is bound by residues Thr-159, Tyr-165, and Asp-168.

Belongs to the UMP kinase family. As to quaternary structure, homohexamer.

The protein resides in the cytoplasm. It carries out the reaction UMP + ATP = UDP + ADP. It participates in pyrimidine metabolism; CTP biosynthesis via de novo pathway; UDP from UMP (UMPK route): step 1/1. Inhibited by UTP. In terms of biological role, catalyzes the reversible phosphorylation of UMP to UDP. In Christiangramia forsetii (strain DSM 17595 / CGMCC 1.15422 / KT0803) (Gramella forsetii), this protein is Uridylate kinase.